The primary structure comprises 477 residues: Regulatory protein HrpB (477 aa).

The 103-residue stretch at 375-477 folds into the HTH araC/xylS-type domain; that stretch reads RRAYRYIIEN…NEAPSETIWR (103 aa). 2 consecutive DNA-binding regions (H-T-H motif) follow at residues 393 to 414 and 444 to 467; these read REVA…KSAV and IIDT…RKQF.

Positive regulation of hypersensitive response genes involved in plant pathogenicity and partly of its own synthesis in minimal medium. This Ralstonia nicotianae (strain ATCC BAA-1114 / GMI1000) (Ralstonia solanacearum) protein is Regulatory protein HrpB (hrpB).